Here is a 595-residue protein sequence, read N- to C-terminus: MAGAIASRMSFSSLKRKQPKTFTVRIVTMDAEMEFNCEMKWKGKDLFDLVCRTLGLRETWFFGLQYTIKDTVAWLKMDKKVLDHDVSKEEPVTFHFLAKFYPENAEEELVQEITQHLFFLQVKKQILDEKIYCPPEASVLLASYAVQAKYGDYDPSVHKRGFLAQEELLPKRVINLYQMTPEMWEERITAWYAEHRGRARDEAEMEYLKIAQDLEMYGVNYFAIRNKKGTELLLGVDALGLHIYDPENRLTPKISFPWNEIRNISYSDKEFTIKPLDKKIDVFKFNSSKLRVNKLILQLCIGNHDLFMRRRKADSLEVQQMKAQAREEKARKQMERQRLAREKQMREEAERTRDELERRLLQMKEEATMANEALMRSEETADLLAEKAQITEEEAKLLAQKAAEAEQEMQRIKATAIRTEEEKRLMEQKVLEAEVLALKMAEESERRAKEADQLKQDLQEAREAERRAKQKLLEIATKPTYPPMNPIPAPLPPDIPSFNLIGDSLSFDFKDTDMKRLSMEIEKEKVEYMEKSKHLQEQLNELKTEIEALKLKERETALDILHNENSDRGGSSKHNTIKKLTLQSAKSRVAFFEEL.

A Phosphoserine modification is found at Ser13. The FERM domain occupies 22-311 (FTVRIVTMDA…GNHDLFMRRR (290 aa)). Ser518 carries the post-translational modification Phosphoserine; by PAK.

As to quaternary structure, interacts with NHERF1, HGS and AGAP2. Interacts with LAYN. Interacts with SGSM3. Interacts (via FERM domain) with MPP1. Interacts with WWC1. Interacts with the CUL4A-RBX1-DDB1-VprBP/DCAF1 E3 ubiquitin-protein ligase complex. The unphosphorylated form interacts (via FERM domain) with VPRBP/DCAF1. Interacts (via FERM domain) with NOP53; the interaction is direct. Interacts with SCHIP1; the interaction is direct. In terms of processing, phosphorylation of Ser-518 inhibits nuclear localization by disrupting the intramolecular association of the FERM domain with the C-terminal tail. The dephosphorylation of Ser-518 favors the interaction with NOP53. Post-translationally, ubiquitinated by the CUL4A-RBX1-DDB1-DCAF1/VprBP E3 ubiquitin-protein ligase complex for ubiquitination and subsequent proteasome-dependent degradation. Widely expressed. Isoform 1 and isoform 3 are predominant. Isoform 4, isoform 5 and isoform 6 are expressed moderately. Isoform 8 is found at low frequency. Isoform 7, isoform 9 and isoform 10 are not expressed in adult tissues, with the exception of adult retina expressing isoform 10. Isoform 9 is faintly expressed in fetal brain, heart, lung, skeletal muscle and spleen. Fetal thymus expresses isoforms 1, 7, 9 and 10 at similar levels.

It is found in the cell projection. Its subcellular location is the filopodium membrane. The protein localises to the ruffle membrane. The protein resides in the nucleus. It localises to the cytoplasm. It is found in the perinuclear region. Its subcellular location is the cytoplasmic granule. The protein localises to the cytoskeleton. In terms of biological role, probable regulator of the Hippo/SWH (Sav/Wts/Hpo) signaling pathway, a signaling pathway that plays a pivotal role in tumor suppression by restricting proliferation and promoting apoptosis. Along with WWC1 can synergistically induce the phosphorylation of LATS1 and LATS2 and can probably function in the regulation of the Hippo/SWH (Sav/Wts/Hpo) signaling pathway. May act as a membrane stabilizing protein. May inhibit PI3 kinase by binding to AGAP2 and impairing its stimulating activity. Suppresses cell proliferation and tumorigenesis by inhibiting the CUL4A-RBX1-DDB1-VprBP/DCAF1 E3 ubiquitin-protein ligase complex. This is Merlin (NF2) from Homo sapiens (Human).